Reading from the N-terminus, the 195-residue chain is Peptidyl-tRNA hydrolase (195 aa).

Tyrosine 17 serves as a coordination point for tRNA. The active-site Proton acceptor is histidine 22. Residues tyrosine 68, asparagine 70, and asparagine 116 each coordinate tRNA.

Belongs to the PTH family. As to quaternary structure, monomer.

It localises to the cytoplasm. The catalysed reaction is an N-acyl-L-alpha-aminoacyl-tRNA + H2O = an N-acyl-L-amino acid + a tRNA + H(+). Functionally, hydrolyzes ribosome-free peptidyl-tRNAs (with 1 or more amino acids incorporated), which drop off the ribosome during protein synthesis, or as a result of ribosome stalling. Catalyzes the release of premature peptidyl moieties from peptidyl-tRNA molecules trapped in stalled 50S ribosomal subunits, and thus maintains levels of free tRNAs and 50S ribosomes. This Shewanella sp. (strain ANA-3) protein is Peptidyl-tRNA hydrolase.